A 246-amino-acid polypeptide reads, in one-letter code: 3-oxoacyl-[acyl-carrier-protein] reductase FabG (246 aa).

Residues 11–14 (GASR), S36, 62–63 (DV), and N89 each bind NADP(+). Position 141 (S141) interacts with substrate. Y154 functions as the Proton acceptor in the catalytic mechanism. NADP(+)-binding positions include 154–158 (YVAAK) and I187.

Belongs to the short-chain dehydrogenases/reductases (SDR) family. As to quaternary structure, homotetramer.

It carries out the reaction a (3R)-hydroxyacyl-[ACP] + NADP(+) = a 3-oxoacyl-[ACP] + NADPH + H(+). The protein operates within lipid metabolism; fatty acid biosynthesis. Functionally, catalyzes the NADPH-dependent reduction of beta-ketoacyl-ACP substrates to beta-hydroxyacyl-ACP products, the first reductive step in the elongation cycle of fatty acid biosynthesis. This is 3-oxoacyl-[acyl-carrier-protein] reductase FabG (fabG) from Bacillus subtilis (strain 168).